The primary structure comprises 218 residues: MGQKINPLGFRLGTTQSHHSLWFAQPKKYSEGLEEDKKIRDCIKNYVQKNIRISSGMEGIARIEIQKRIDLIQIIIYMGFPKLLIEDKPRRVEELQMNVQKELNCVNRKLNIAITRISNPYGDPNILAEFIAGQLKNRVSFRKAMKKAIELTEQANTKGIQVQIAGRIDGKEIARVEWIREGRVPLQTIEAKIDYCSYTVRTIYGVLGIKIWIFVDEE.

One can recognise a KH type-2 domain in the interval 47 to 118; it reads VQKNIRISSG…KLNIAITRIS (72 aa).

It belongs to the universal ribosomal protein uS3 family. In terms of assembly, part of the 30S ribosomal subunit.

It is found in the plastid. Its subcellular location is the chloroplast. This chain is Small ribosomal subunit protein uS3c (rps3), found in Nasturtium officinale (Watercress).